The primary structure comprises 206 residues: LexA repressor (206 aa).

The segment at residues 28–48 is a DNA-binding region (H-T-H motif); it reads RAEIASELGFKSANAAEEHLK. Catalysis depends on for autocatalytic cleavage activity residues serine 122 and lysine 160.

The protein belongs to the peptidase S24 family. In terms of assembly, homodimer.

It catalyses the reaction Hydrolysis of Ala-|-Gly bond in repressor LexA.. Functionally, represses a number of genes involved in the response to DNA damage (SOS response), including recA and lexA. In the presence of single-stranded DNA, RecA interacts with LexA causing an autocatalytic cleavage which disrupts the DNA-binding part of LexA, leading to derepression of the SOS regulon and eventually DNA repair. The sequence is that of LexA repressor from Tolumonas auensis (strain DSM 9187 / NBRC 110442 / TA 4).